The chain runs to 305 residues: tRNA dimethylallyltransferase (305 aa).

Residue 8-15 (GPTASGKT) participates in ATP binding. Position 10–15 (10–15 (TASGKT)) interacts with substrate. Residues 33–36 (DSQQ) form an interaction with substrate tRNA region.

This sequence belongs to the IPP transferase family. Monomer. Mg(2+) serves as cofactor.

The enzyme catalyses adenosine(37) in tRNA + dimethylallyl diphosphate = N(6)-dimethylallyladenosine(37) in tRNA + diphosphate. In terms of biological role, catalyzes the transfer of a dimethylallyl group onto the adenine at position 37 in tRNAs that read codons beginning with uridine, leading to the formation of N6-(dimethylallyl)adenosine (i(6)A). The chain is tRNA dimethylallyltransferase from Anaeromyxobacter sp. (strain K).